Consider the following 277-residue polypeptide: Elongation factor 1-delta (277 aa).

The residue at position 2 (A2) is an N-acetylalanine. Position 17 is an N6-acetyllysine (K17). 5 positions are modified to phosphoserine: S37, S44, S60, S86, and S106. K107 bears the N6-acetyllysine mark. Residues S113–A171 are disordered. Residue K117 is modified to N6-acetyllysine; alternate. An N6-succinyllysine; alternate modification is found at K117. S119 is modified (phosphoserine). At T129 the chain carries Phosphothreonine. Phosphoserine is present on S133. Residue T147 is modified to Phosphothreonine. Residues T149–K168 show a composition bias toward acidic residues. Residue S162 is modified to Phosphoserine; by CK2.

Belongs to the EF-1-beta/EF-1-delta family. EF-1 is composed of 4 subunits: alpha, beta, delta, and gamma.

EF-1-beta and EF-1-delta stimulate the exchange of GDP bound to EF-1-alpha to GTP. The chain is Elongation factor 1-delta (EEF1D) from Ovis aries (Sheep).